Reading from the N-terminus, the 858-residue chain is GDP-fucose protein O-fucosyltransferase 2 (858 aa).

Residues Met-1–Arg-150 lie on the Cytoplasmic side of the membrane. The helical; Signal-anchor for type II membrane protein transmembrane segment at Leu-151–Ala-171 threads the bilayer. At Thr-172–Leu-858 the chain is on the lumenal side. Gly-237 to His-241 contributes to the GDP-beta-L-fucose binding site. Catalysis depends on Glu-238, which acts as the Proton acceptor. The tract at residues Ala-448–Glu-510 is disordered. Over residues Asp-486–Glu-510 the composition is skewed to basic and acidic residues. Residues His-646–Arg-648 and Arg-787–Phe-788 contribute to the GDP-beta-L-fucose site. The segment at Thr-819 to Leu-858 is disordered. Positions Lys-831–Arg-846 are enriched in basic and acidic residues.

Belongs to the glycosyltransferase 68 family.

It is found in the endoplasmic reticulum membrane. It catalyses the reaction L-seryl-[protein] + GDP-beta-L-fucose = 3-O-(alpha-L-fucosyl)-L-seryl-[protein] + GDP + H(+). The catalysed reaction is L-threonyl-[protein] + GDP-beta-L-fucose = 3-O-(alpha-L-fucosyl)-L-threonyl-[protein] + GDP + H(+). Its pathway is protein modification; protein glycosylation. In terms of biological role, catalyzes the reaction that attaches fucose through an O-glycosidic linkage to a conserved serine or threonine residue in the consensus sequence C1-X-X-S/T-C2 of thrombospondin type I repeats (TSRs) where C1 and C2 are the first and second cysteines of the repeat, respectively. O-fucosylates microneme protein MIC2 and may play a role in its stabilization. Probably by regulating protein O-fucosylation, may play a role in tachyzoite adhesion to and/or invasion of host cells; however, POFUT2 involvement in adhesion/invasion is controversial. This chain is GDP-fucose protein O-fucosyltransferase 2, found in Toxoplasma gondii (strain ATCC 50853 / GT1).